A 378-amino-acid chain; its full sequence is Cyclic GMP-AMP synthase-like receptor 1 (378 aa).

Residues Glu-71, Asp-73, and Asp-187 each coordinate Mg(2+). Glu-71–Asp-73 provides a ligand contact to ATP. GTP is bound by residues Asp-187 and Thr-233–Glu-240. Residues Tyr-237–Glu-240, Lys-258, and Ser-271–Lys-275 contribute to the ATP site.

The protein belongs to the mab-21 family. The cofactor is Mg(2+). Requires Mn(2+) as cofactor.

The enzyme catalyses GTP + ATP = 3',2'-cGAMP + 2 diphosphate. It carries out the reaction GTP + ATP = pppA(2'-5')pG + diphosphate. It catalyses the reaction pppA(2'-5')pG = 3',2'-cGAMP + diphosphate. Its activity is regulated as follows. The enzyme activity is specifically activated by double-stranded RNA (dsRNA). Recognizes long dsRNA (&gt;30 bp) with no preference for 5' RNA phosphorylation. Its function is as follows. Nucleotidyltransferase that catalyzes the formation of cyclic GMP-AMP (3',2'-cGAMP) from ATP and GTP and plays a key role in antiviral innate immunity. Synthesizes 3',2'-cGAMP in a two-step reaction through production of the linear intermediate pppA(2'-5')pG. Acts as a key sensor of double-stranded RNA (dsRNA), the presence of dsRNA in the cytoplasm being a danger signal that triggers the immune responses. Directly binds dsRNA, activating the nucleotidyltransferase activity, leading to synthesis of 3',2'-cGAMP, a second messenger that binds to and activates Sting, thereby triggering the antiviral immune response via activation of the NF-kappa-B transcription factor Rel (Relish). 3',2'-cGAMP is protected from poxin cleavage. This chain is Cyclic GMP-AMP synthase-like receptor 1, found in Drosophila melanogaster (Fruit fly).